The sequence spans 566 residues: Membrane protein insertase YidC (566 aa).

5 helical membrane-spanning segments follow: residues 3-23 (IKRI…FNAW), 346-366 (GWLW…HAVV), 369-389 (WGWS…WFSA), 436-456 (GGCL…YVII), and 509-529 (MWIL…GLVL).

The protein belongs to the OXA1/ALB3/YidC family. Type 1 subfamily. Interacts with the Sec translocase complex via SecD. Specifically interacts with transmembrane segments of nascent integral membrane proteins during membrane integration.

The protein resides in the cell inner membrane. Required for the insertion and/or proper folding and/or complex formation of integral membrane proteins into the membrane. Involved in integration of membrane proteins that insert both dependently and independently of the Sec translocase complex, as well as at least some lipoproteins. Aids folding of multispanning membrane proteins. The chain is Membrane protein insertase YidC from Coxiella burnetii (strain Dugway 5J108-111).